A 344-amino-acid polypeptide reads, in one-letter code: Dihydroorotate dehydrogenase (quinone) (344 aa).

Residues Ala-65–Lys-69 and Thr-89 each bind FMN. Residue Lys-69 participates in substrate binding. Asn-114–Phe-118 serves as a coordination point for substrate. Residues Asn-145 and Asn-178 each coordinate FMN. Asn-178 lines the substrate pocket. Ser-181 acts as the Nucleophile in catalysis. Asn-183 is a binding site for substrate. Positions 223 and 251 each coordinate FMN. Asn-252–Thr-253 serves as a coordination point for substrate. FMN contacts are provided by residues Gly-274, Gly-303, and Tyr-324 to Ser-325.

This sequence belongs to the dihydroorotate dehydrogenase family. Type 2 subfamily. In terms of assembly, monomer. It depends on FMN as a cofactor.

The protein resides in the cell membrane. The catalysed reaction is (S)-dihydroorotate + a quinone = orotate + a quinol. Its pathway is pyrimidine metabolism; UMP biosynthesis via de novo pathway; orotate from (S)-dihydroorotate (quinone route): step 1/1. In terms of biological role, catalyzes the conversion of dihydroorotate to orotate with quinone as electron acceptor. The chain is Dihydroorotate dehydrogenase (quinone) from Cupriavidus necator (strain ATCC 17699 / DSM 428 / KCTC 22496 / NCIMB 10442 / H16 / Stanier 337) (Ralstonia eutropha).